A 115-amino-acid polypeptide reads, in one-letter code: Cycloviolacin-O13 (115 aa).

The signal sequence occupies residues 1-22 (MDAKKMFVALVLIATFALPSLA). Positions 23–81 (TFEKDFITPETIQAILKKSAPLSNIMLEEDVINALLKSKTVISNPIIEEAFLKNSNGLN) are excised as a propeptide. The segment at residues 82–111 (GIPCGESCVWIPCISAAIGCSCKSKVCYRN) is a cross-link (cyclopeptide (Gly-Asn)). Cystine bridges form between cysteine 85–cysteine 101, cysteine 89–cysteine 103, and cysteine 94–cysteine 108. Positions 112–115 (SLDN) are excised as a propeptide.

Cycloviolacin-O13 is a cyclic peptide. In terms of tissue distribution, expressed in leaves, petals, petioles, roots and runners (at protein level).

Its function is as follows. Probably participates in a plant defense mechanism. Has hemolytic activity. This is Cycloviolacin-O13 from Viola odorata (Sweet violet).